The primary structure comprises 493 residues: Putative MgpC-like protein MPN_414 (493 aa).

Residues 1 to 14 (MKPTSLPKNFTNNP) are compositionally biased toward polar residues. Disordered regions lie at residues 1–92 (MKPT…GHNS) and 441–493 (KSAR…SGNH). Composition is skewed to basic and acidic residues over residues 25 to 34 (DNGRAYRKLN) and 44 to 56 (DSTKDGKGKDKDG). Polar residues-rich tracts occupy residues 72–92 (VSSTGSQMSAVTDSQQSGHNS) and 445–472 (ENAQSTSDDNSNTKVKWTKPPRTTSPCR). Positions 482–493 (RVTEEERSSGNH) are enriched in basic and acidic residues.

The protein belongs to the MgpC family.

This chain is Putative MgpC-like protein MPN_414, found in Mycoplasma pneumoniae (strain ATCC 29342 / M129 / Subtype 1) (Mycoplasmoides pneumoniae).